The chain runs to 420 residues: uncharacterized protein (420 aa).

The TRAM domain maps to 7–65 (NIERGSVINVEILNAAHGGQGIAKYDGRVIFVKGAFPGDRLSANITHVKKKFARATIAS). Gln245, Tyr280, Glu304, and Asp349 together coordinate S-adenosyl-L-methionine. Cys376 acts as the Nucleophile in catalysis.

Belongs to the class I-like SAM-binding methyltransferase superfamily. RNA M5U methyltransferase family.

This is an uncharacterized protein from Corynebacterium diphtheriae (strain ATCC 700971 / NCTC 13129 / Biotype gravis).